The following is a 70-amino-acid chain: Conotoxin elongated-tx3a-a (70 aa).

A signal peptide spans 1 to 24 (MLKMGVVLFIFLVLFPLATLQLDA). Positions 25–44 (DQPVERYAENKQLLSPDERR) are excised as a propeptide. Intrachain disulfides connect Cys55-Cys68, Cys56-Cys66, and Cys61-Cys69. Trp58 carries the post-translational modification 6'-bromotryptophan; partial. At Cys69 the chain carries Cysteine amide; partial.

It belongs to the conotoxin M superfamily. Post-translationally, two short peptides are produced from this precursor; Conotoxin tx3a-b is amidated at Cys-69 (but has no bromotryptophan), whereas conotoxin tx3a-a has an unmodified Gly-70 and a bromotryptophan. Two elongated peptides are also produced; Conotoxin elongated-tx3a-b is amidated at Cys-69 (but has no bromotryptophan), whereas conotoxin elongated tx3a-a has an unmodified Gly-70 (but has no bromotryptophan). Ju et al. (2022) describe a disulfide connectivity (C55-C61; C56-C69; C66-C68) that differs from that of Han and colleagues (2006), McDougal et al. (2008), and Ueberheide et al. (2009). Expressed by the venom duct. Is present in all duct parts with a highest content in part 2 (proximal of the venom bulb) and then decreases in concentration toward the end of the duct.

Its subcellular location is the secreted. Functionally, intracranial injection into mice causes scratching and hyperactivity. In vitro, inhibits proliferation of the mice ovarian cancer cells ID8. The protein is Conotoxin elongated-tx3a-a of Conus textile (Cloth-of-gold cone).